Here is a 172-residue protein sequence, read N- to C-terminus: 3-hydroxydecanoyl-[acyl-carrier-protein] dehydratase (172 aa).

The active site involves His71.

The protein belongs to the thioester dehydratase family. FabA subfamily. As to quaternary structure, homodimer.

It localises to the cytoplasm. It catalyses the reaction a (3R)-hydroxyacyl-[ACP] = a (2E)-enoyl-[ACP] + H2O. The catalysed reaction is (3R)-hydroxydecanoyl-[ACP] = (2E)-decenoyl-[ACP] + H2O. The enzyme catalyses (2E)-decenoyl-[ACP] = (3Z)-decenoyl-[ACP]. The protein operates within lipid metabolism; fatty acid biosynthesis. Its function is as follows. Necessary for the introduction of cis unsaturation into fatty acids. Catalyzes the dehydration of (3R)-3-hydroxydecanoyl-ACP to E-(2)-decenoyl-ACP and then its isomerization to Z-(3)-decenoyl-ACP. Can catalyze the dehydratase reaction for beta-hydroxyacyl-ACPs with saturated chain lengths up to 16:0, being most active on intermediate chain length. In Yersinia enterocolitica serotype O:8 / biotype 1B (strain NCTC 13174 / 8081), this protein is 3-hydroxydecanoyl-[acyl-carrier-protein] dehydratase.